A 341-amino-acid polypeptide reads, in one-letter code: RNA 3'-terminal phosphate cyclase (341 aa).

Residues Gln100 and 283–287 (FLGDQ) each bind ATP. The active-site Tele-AMP-histidine intermediate is the His307.

It belongs to the RNA 3'-terminal cyclase family. Type 1 subfamily.

It is found in the cytoplasm. It catalyses the reaction a 3'-end 3'-phospho-ribonucleotide-RNA + ATP = a 3'-end 2',3'-cyclophospho-ribonucleotide-RNA + AMP + diphosphate. Catalyzes the conversion of 3'-phosphate to a 2',3'-cyclic phosphodiester at the end of RNA. The mechanism of action of the enzyme occurs in 3 steps: (A) adenylation of the enzyme by ATP; (B) transfer of adenylate to an RNA-N3'P to produce RNA-N3'PP5'A; (C) and attack of the adjacent 2'-hydroxyl on the 3'-phosphorus in the diester linkage to produce the cyclic end product. The biological role of this enzyme is unknown but it is likely to function in some aspects of cellular RNA processing. The polypeptide is RNA 3'-terminal phosphate cyclase (rtcA) (Pyrococcus horikoshii (strain ATCC 700860 / DSM 12428 / JCM 9974 / NBRC 100139 / OT-3)).